A 203-amino-acid chain; its full sequence is A-type ATP synthase subunit E (203 aa).

Belongs to the V-ATPase E subunit family. In terms of assembly, has multiple subunits with at least A(3), B(3), C, D, E, F, H, I and proteolipid K(x).

It localises to the cell membrane. Component of the A-type ATP synthase that produces ATP from ADP in the presence of a proton gradient across the membrane. The chain is A-type ATP synthase subunit E from Methanococcus aeolicus (strain ATCC BAA-1280 / DSM 17508 / OCM 812 / Nankai-3).